The primary structure comprises 233 residues: Small ribosomal subunit protein uS5 (233 aa).

Basic and acidic residues-rich tracts occupy residues 1-12 (MANESEIQKTEN) and 39-54 (RGRDGRGRRDDRRNEE). Residues 1–54 (MANESEIQKTENAEVANAANGTNPNNERRGRGGRGRGGRGRDGRGRRDDRRNEE) form a disordered region. Residues 59–122 (LIEKLVHINR…AAAKKTMIRV (64 aa)) form the S5 DRBM domain.

Belongs to the universal ribosomal protein uS5 family. In terms of assembly, part of the 30S ribosomal subunit. Contacts proteins S4 and S8.

In terms of biological role, with S4 and S12 plays an important role in translational accuracy. Located at the back of the 30S subunit body where it stabilizes the conformation of the head with respect to the body. This chain is Small ribosomal subunit protein uS5, found in Zymomonas mobilis subsp. mobilis (strain ATCC 31821 / ZM4 / CP4).